An 82-amino-acid chain; its full sequence is Delta-actitoxin-Aeq2c (82 aa).

The N-terminal stretch at 1–19 (MNRLMILVFAAVFLALASA) is a signal peptide. Positions 20–26 (DEDVDIA) are excised as a propeptide. 3 disulfide bridges follow: cysteine 32–cysteine 79, cysteine 34–cysteine 69, and cysteine 62–cysteine 80.

Belongs to the sea anemone sodium channel inhibitory toxin family. Type I subfamily.

Its subcellular location is the secreted. It localises to the nematocyst. Functionally, binds specifically to voltage-gated sodium channels (Nav), thereby delaying their inactivation during signal transduction. Causes death to crabs. In Actinia equina (Beadlet anemone), this protein is Delta-actitoxin-Aeq2c.